The following is a 141-amino-acid chain: ATP synthase epsilon chain (141 aa).

It belongs to the ATPase epsilon chain family. As to quaternary structure, F-type ATPases have 2 components, CF(1) - the catalytic core - and CF(0) - the membrane proton channel. CF(1) has five subunits: alpha(3), beta(3), gamma(1), delta(1), epsilon(1). CF(0) has three main subunits: a, b and c.

Its subcellular location is the cell inner membrane. Produces ATP from ADP in the presence of a proton gradient across the membrane. This chain is ATP synthase epsilon chain, found in Burkholderia mallei (strain NCTC 10247).